Reading from the N-terminus, the 119-residue chain is Flagellar transcriptional regulator FlhD (119 aa).

Belongs to the FlhD family. Homodimer; disulfide-linked. Forms a heterohexamer composed of two FlhC and four FlhD subunits. Each FlhC binds a FlhD dimer, forming a heterotrimer, and a hexamer assembles by dimerization of two heterotrimers.

It localises to the cytoplasm. Functions in complex with FlhC as a master transcriptional regulator that regulates transcription of several flagellar and non-flagellar operons by binding to their promoter region. Activates expression of class 2 flagellar genes, including fliA, which is a flagellum-specific sigma factor that turns on the class 3 genes. Also regulates genes whose products function in a variety of physiological pathways. This is Flagellar transcriptional regulator FlhD from Escherichia fergusonii (strain ATCC 35469 / DSM 13698 / CCUG 18766 / IAM 14443 / JCM 21226 / LMG 7866 / NBRC 102419 / NCTC 12128 / CDC 0568-73).